Reading from the N-terminus, the 152-residue chain is Cytochrome c-type biogenesis protein CcmE 2 (152 aa).

At 1–8 the chain is on the cytoplasmic side; sequence MNPQRRRR. The helical; Signal-anchor for type II membrane protein transmembrane segment at 9-29 threads the bilayer; it reads LWLVLALVLAGGLATTLVAMA. The Periplasmic segment spans residues 30–152; the sequence is LQRNVAYLYT…HQVAPAKVTQ (123 aa). The heme site is built by His123 and Tyr127.

The protein belongs to the CcmE/CycJ family.

The protein localises to the cell inner membrane. Heme chaperone required for the biogenesis of c-type cytochromes. Transiently binds heme delivered by CcmC and transfers the heme to apo-cytochromes in a process facilitated by CcmF and CcmH. This chain is Cytochrome c-type biogenesis protein CcmE 2, found in Xanthomonas campestris pv. campestris (strain 8004).